The following is a 126-amino-acid chain: Large ribosomal subunit protein uL22 (126 aa).

This sequence belongs to the universal ribosomal protein uL22 family. As to quaternary structure, part of the 50S ribosomal subunit.

This protein binds specifically to 23S rRNA; its binding is stimulated by other ribosomal proteins, e.g. L4, L17, and L20. It is important during the early stages of 50S assembly. It makes multiple contacts with different domains of the 23S rRNA in the assembled 50S subunit and ribosome. In terms of biological role, the globular domain of the protein is located near the polypeptide exit tunnel on the outside of the subunit, while an extended beta-hairpin is found that lines the wall of the exit tunnel in the center of the 70S ribosome. The chain is Large ribosomal subunit protein uL22 from Sphingopyxis alaskensis (strain DSM 13593 / LMG 18877 / RB2256) (Sphingomonas alaskensis).